A 265-amino-acid polypeptide reads, in one-letter code: Oxygen-evolving enhancer protein 2-2, chloroplastic (265 aa).

The transit peptide at 1–79 directs the protein to the chloroplast; sequence MASTQCFLHH…VGSKVSPADA (79 aa).

Belongs to the PsbP family.

The protein localises to the plastid. It is found in the chloroplast thylakoid membrane. May be involved in the regulation of photosystem II. The sequence is that of Oxygen-evolving enhancer protein 2-2, chloroplastic (PSBP2) from Nicotiana tabacum (Common tobacco).